A 276-amino-acid polypeptide reads, in one-letter code: NAD kinase (276 aa).

The Proton acceptor role is filled by D61. Residues 61 to 62 (DG), R66, 135 to 136 (NE), R146, H163, D165, and A200 contribute to the NAD(+) site.

Belongs to the NAD kinase family. It depends on a divalent metal cation as a cofactor.

It localises to the cytoplasm. It carries out the reaction NAD(+) + ATP = ADP + NADP(+) + H(+). In terms of biological role, involved in the regulation of the intracellular balance of NAD and NADP, and is a key enzyme in the biosynthesis of NADP. Catalyzes specifically the phosphorylation on 2'-hydroxyl of the adenosine moiety of NAD to yield NADP. This is NAD kinase from Chloroflexus aurantiacus (strain ATCC 29366 / DSM 635 / J-10-fl).